Consider the following 257-residue polypeptide: Type III pantothenate kinase (257 aa).

An ATP-binding site is contributed by 6 to 13; the sequence is DVGNTSTK. A substrate-binding site is contributed by 109–112; that stretch reads GADR. The active-site Proton acceptor is Asp111. Asp132 provides a ligand contact to K(+). Thr135 is a binding site for ATP. Substrate is bound at residue Thr187.

This sequence belongs to the type III pantothenate kinase family. As to quaternary structure, homodimer. It depends on NH4(+) as a cofactor. Requires K(+) as cofactor.

The protein resides in the cytoplasm. The catalysed reaction is (R)-pantothenate + ATP = (R)-4'-phosphopantothenate + ADP + H(+). It functions in the pathway cofactor biosynthesis; coenzyme A biosynthesis; CoA from (R)-pantothenate: step 1/5. Functionally, catalyzes the phosphorylation of pantothenate (Pan), the first step in CoA biosynthesis. The chain is Type III pantothenate kinase from Anaplasma marginale (strain Florida).